A 1026-amino-acid polypeptide reads, in one-letter code: Multidrug resistance protein MdtC (1026 aa).

Transmembrane regions (helical) follow at residues 15–35 (ILIA…LPVA), 333–353 (EVEE…FLFL), 360–380 (LIPA…MYLC), 387–407 (LSLM…IVVL), 431–451 (VGFT…PLLL), 463–483 (FAVT…TLTP), 528–548 (LVGV…IAIP), 853–873 (LILI…LYES), 897–917 (LFNA…IGIV), 953–973 (PIMM…LSGG), and 984–1004 (ITIV…TPVV).

This sequence belongs to the resistance-nodulation-cell division (RND) (TC 2.A.6) family. MdtC subfamily. Part of a tripartite efflux system composed of MdtA, MdtB and MdtC. MdtC forms a heteromultimer with MdtB.

It localises to the cell inner membrane. The protein is Multidrug resistance protein MdtC of Salmonella dublin (strain CT_02021853).